The following is a 550-amino-acid chain: CTP synthase (550 aa).

An amidoligase domain region spans residues 1-272 (MKTKFIFITG…DQKITSFLNL (272 aa)). CTP is bound at residue Ser-14. UTP is bound at residue Ser-14. 15–20 (SLGKGL) lines the ATP pocket. Tyr-55 contributes to the L-glutamine binding site. Asp-72 serves as a coordination point for ATP. Mg(2+)-binding residues include Asp-72 and Glu-146. CTP is bound by residues 153-155 (DIE), 193-198 (KTKPTQ), and Lys-229. UTP contacts are provided by residues 193-198 (KTKPTQ) and Lys-229. The Glutamine amidotransferase type-1 domain maps to 297–550 (TITIVGKYVG…IHAACNHNKQ (254 aa)). Residue Gly-359 participates in L-glutamine binding. Residue Cys-386 is the Nucleophile; for glutamine hydrolysis of the active site. L-glutamine-binding positions include 387–390 (LGMQ), Glu-410, and Arg-478. Residues His-523 and Glu-525 contribute to the active site.

Belongs to the CTP synthase family. In terms of assembly, homotetramer.

The enzyme catalyses UTP + L-glutamine + ATP + H2O = CTP + L-glutamate + ADP + phosphate + 2 H(+). It catalyses the reaction L-glutamine + H2O = L-glutamate + NH4(+). It carries out the reaction UTP + NH4(+) + ATP = CTP + ADP + phosphate + 2 H(+). The protein operates within pyrimidine metabolism; CTP biosynthesis via de novo pathway; CTP from UDP: step 2/2. Its activity is regulated as follows. Allosterically activated by GTP, when glutamine is the substrate; GTP has no effect on the reaction when ammonia is the substrate. The allosteric effector GTP functions by stabilizing the protein conformation that binds the tetrahedral intermediate(s) formed during glutamine hydrolysis. Inhibited by the product CTP, via allosteric rather than competitive inhibition. In terms of biological role, catalyzes the ATP-dependent amination of UTP to CTP with either L-glutamine or ammonia as the source of nitrogen. Regulates intracellular CTP levels through interactions with the four ribonucleotide triphosphates. The chain is CTP synthase from Lawsonia intracellularis (strain PHE/MN1-00).